The sequence spans 347 residues: NADH-ubiquinone oxidoreductase chain 2 (347 aa).

A run of 11 helical transmembrane segments spans residues Pro-3 to Ser-23, His-25 to Met-45, Ser-67 to Met-87, Met-96 to Pro-116, Ile-122 to Leu-142, Ile-145 to Gly-165, Ile-178 to Pro-198, Met-200 to Met-220, Ala-237 to Leu-257, Asp-274 to Met-294, and Leu-325 to Ile-345.

This sequence belongs to the complex I subunit 2 family. In terms of assembly, core subunit of respiratory chain NADH dehydrogenase (Complex I) which is composed of 45 different subunits. Interacts with TMEM242.

The protein resides in the mitochondrion inner membrane. The enzyme catalyses a ubiquinone + NADH + 5 H(+)(in) = a ubiquinol + NAD(+) + 4 H(+)(out). Its function is as follows. Core subunit of the mitochondrial membrane respiratory chain NADH dehydrogenase (Complex I) which catalyzes electron transfer from NADH through the respiratory chain, using ubiquinone as an electron acceptor. Essential for the catalytic activity and assembly of complex I. In Ovis aries (Sheep), this protein is NADH-ubiquinone oxidoreductase chain 2.